Here is a 311-residue protein sequence, read N- to C-terminus: Malate dehydrogenase (311 aa).

Residues 7-13 (GAAGGIG) and Asp34 contribute to the NAD(+) site. Positions 81 and 87 each coordinate substrate. NAD(+) contacts are provided by residues Asn94 and 117 to 119 (ITN). Substrate-binding residues include Asn119 and Arg153. His177 (proton acceptor) is an active-site residue. NAD(+) is bound at residue Met227.

It belongs to the LDH/MDH superfamily. MDH type 1 family. In terms of assembly, homodimer.

It carries out the reaction (S)-malate + NAD(+) = oxaloacetate + NADH + H(+). In terms of biological role, catalyzes the reversible oxidation of malate to oxaloacetate. The chain is Malate dehydrogenase from Shewanella pealeana (strain ATCC 700345 / ANG-SQ1).